Consider the following 366-residue polypeptide: Probable quinol oxidase subunit 2 (366 aa).

Positions methionine 1–glycine 19 are cleaved as a signal peptide. Cysteine 20 is lipidated: N-palmitoyl cysteine. A lipid anchor (S-diacylglycerol cysteine) is attached at cysteine 20. A run of 2 helical transmembrane segments spans residues phenylalanine 38 to phenylalanine 58 and alanine 80 to proline 100. The tract at residues glutamate 330–histidine 366 is disordered. Positions glutamate 335–histidine 366 are enriched in basic and acidic residues.

Belongs to the cytochrome c oxidase subunit 2 family.

It localises to the cell membrane. The catalysed reaction is 2 a quinol + O2 = 2 a quinone + 2 H2O. Its function is as follows. Catalyzes quinol oxidation with the concomitant reduction of oxygen to water. Subunit II transfers the electrons from a quinol to the binuclear center of the catalytic subunit I. The chain is Probable quinol oxidase subunit 2 (qoxA) from Staphylococcus aureus (strain bovine RF122 / ET3-1).